Reading from the N-terminus, the 708-residue chain is Caprin-1 (708 aa).

2 stretches are compositionally biased toward low complexity: residues 1–15 (MPSA…SKSS) and 22–37 (GSSG…APAS). A disordered region spans residues 1–48 (MPSATSHSGSGSKSSGPPPPSGSSGNEAGAGAAAPASQHPMTGTGAVQ). N-acetylproline is present on Pro2. Ser10 carries the phosphoserine modification. Positions 58–92 (VIDKKLRNLEKKKGKLDDYQERMNKGERLNQDQLD) form a coiled coil. Ser113 is subject to Phosphoserine. A coiled-coil region spans residues 123–151 (KTIKKTARREQLMREEAEQKRLKTVLELQ). Arg163 carries the omega-N-methylarginine modification. Residues 258 to 287 (EEAASAPTVEDQAAEAEPEPVEEYTEQNEV) form a disordered region. Residues 269-287 (QAAEAEPEPVEEYTEQNEV) show a composition bias toward acidic residues. 2 positions are modified to phosphoserine: Ser333 and Ser341. The tract at residues 358–379 (QDLMAQMQGPYNFIQDSMLDFE) is G3BP1-binding. The segment covering 415–452 (LAQPNQVSVQPEATQVPLVSSTSEGYTASQPLYQPSHA) has biased composition (polar residues). Disordered regions lie at residues 415 to 459 (LAQP…RPQK), 473 to 497 (TDQT…GTSK), 521 to 559 (NAPV…QTEL), and 571 to 708 (YHGS…QQVN). Low complexity-rich tracts occupy residues 475–489 (QTTA…SQPQ) and 535–559 (QQNQ…QTEL). Polar residues predominate over residues 572–603 (HGSQDQPHQVTGNHQQPPQQNTGFPRSNQPYY). Phosphotyrosine is present on Tyr623. Arg624 and Arg631 each carry omega-N-methylarginine. 2 positions are modified to phosphotyrosine: Tyr634 and Tyr637. At Arg638 the chain carries Omega-N-methylarginine. Residues 640–656 (SFSTNTPNSGYTQSQFS) show a composition bias toward polar residues. Residues Ser642 and Ser648 are each glycosylated (O-linked (GlcNAc) serine). 4 positions are modified to phosphotyrosine: Tyr650, Tyr661, Tyr664, and Tyr669. 2 stretches are compositionally biased toward low complexity: residues 675-685 (RGSGQSGPRGA) and 696-708 (NRGM…QQVN). Position 697 is an asymmetric dimethylarginine; alternate (Arg697). The residue at position 697 (Arg697) is an Omega-N-methylarginine; alternate.

The protein belongs to the caprin family. May form homomultimers. Interacts with G3BP1; interaction is direct and promotes stress granule formation. Interacts with G3BP2; interaction is direct and promotes stress granule formation. Interacts with PQBP1. Interacts with DDX3X. Interacts (when phosphorylated by EPHA4) with FMR1; interaction with FMR1 promotes formation of a membraneless compartment. Tyrosine phosphorylation by EPHA4 promotes interaction with FMR1 and liquid-liquid phase separation (LLPS) for the formation of a membraneless compartment that concentrates mRNAs with associated regulatory factors. Post-translationally, O-glycosylated (O-GlcNAcylated), in a cell cycle-dependent manner. O-glycosylation by OGT inhibit ability to undergo liquid-liquid phase separation (LLPS).

Its subcellular location is the cytoplasm. It localises to the cytoplasmic ribonucleoprotein granule. The protein resides in the cytosol. It is found in the cell projection. The protein localises to the dendrite. Its subcellular location is the lamellipodium. Ability to mediate liquid-liquid phase separation is regulated by ATP: moderate concentrations of ATP enhance phase separation, whereas high concentrations of ATP lead to inhibition of phase separation. Its function is as follows. mRNA-binding protein that acts as a regulator of mRNAs transport, translation and/or stability, and which is involved in neurogenesis, synaptic plasticity in neurons and cell proliferation and migration in multiple cell types. Plays an essential role in cytoplasmic stress granule formation. Acts as an mRNA regulator by mediating formation of some phase-separated membraneless compartment: undergoes liquid-liquid phase separation upon binding to target mRNAs, leading to assemble mRNAs into cytoplasmic ribonucleoprotein granules that concentrate mRNAs with associated regulatory factors. Undergoes liquid-liquid phase separation following phosphorylation and interaction with FMR1, promoting formation of cytoplasmic ribonucleoprotein granules that concentrate mRNAs with factors that inhibit translation and mediate deadenylation of target mRNAs. In these cytoplasmic ribonucleoprotein granules, CAPRIN1 mediates recruitment of CNOT7 deadenylase, leading to mRNA deadenylation and degradation. Binds directly and selectively to MYC and CCND2 mRNAs. In neuronal cells, directly binds to several mRNAs associated with RNA granules, including BDNF, CAMK2A, CREB1, MAP2, NTRK2 mRNAs, as well as to GRIN1 and KPNB1 mRNAs, but not to rRNAs. The polypeptide is Caprin-1 (CAPRIN1) (Bos taurus (Bovine)).